We begin with the raw amino-acid sequence, 479 residues long: BURP domain-containing protein 4 (479 aa).

The first 46 residues, 1-46 (MVGKGNECAAARRRFSLRAAAASSSSSSFLPCLLLAAALSAGCCRA), serve as a signal peptide directing secretion. A disordered region spans residues 158–177 (RADGPPKQPATFPASPNGEK). The region spanning 254 to 479 (LFLMKKLHPG…PQGYVLWLAN (226 aa)) is the BURP domain. A glycan (N-linked (GlcNAc...) asparagine) is linked at Asn-445.

In terms of tissue distribution, expressed in stamen.

The polypeptide is BURP domain-containing protein 4 (BURP4) (Oryza sativa subsp. japonica (Rice)).